A 907-amino-acid chain; its full sequence is Sensor protein GacS (907 aa).

The next 3 helical transmembrane spans lie at 9 to 25, 84 to 101, and 159 to 178; these read ASLM…WMQL, VLAH…IGSG, and LFAS…TLAV. In terms of domain architecture, HAMP spans 182–234; that stretch reads RTINGPMSQIKQAVSQLKDGNLETRLPPLGSRELDELASGINRMAATLQNAQE. Residues 281–502 form the Histidine kinase domain; that stretch reads NMSHEIRTPL…EFWISLKLPK (222 aa). H284 is modified (phosphohistidine; by autocatalysis). Residues 658-777 form the Response regulatory domain; the sequence is RVLCVDDNPA…QLAQVVLKWT (120 aa). D707 is subject to 4-aspartylphosphate. The 94-residue stretch at 814–907 folds into the HPt domain; it reads KADLAADMLA…RLEAEARVMA (94 aa). Phosphohistidine is present on H853.

Activation requires a sequential transfer of a phosphate group from a His in the primary transmitter domain, to an Asp in the receiver domain and to a His in the secondary transmitter domain.

The protein localises to the cell inner membrane. It catalyses the reaction ATP + protein L-histidine = ADP + protein N-phospho-L-histidine.. Forms part of a two-component regulatory system GacA/GacS(LemA). May be involved in lesion formation, swarming and in the production of extracellular protease, syringomycin and N-acyl-L-homoserine lactone (acyl-HSL). Required for pathogenicity on bean. This is Sensor protein GacS (gacS) from Pseudomonas syringae pv. syringae.